The following is a 552-amino-acid chain: Non-structural protein NS1 (552 aa).

This sequence belongs to the orbivirus non-structural protein NS1 family.

This Bluetongue virus 13 (isolate USA) (BTV 13) protein is Non-structural protein NS1 (Segment-5).